We begin with the raw amino-acid sequence, 114 residues long: UPF0102 protein Shew_0226 (114 aa).

This sequence belongs to the UPF0102 family.

This is UPF0102 protein Shew_0226 from Shewanella loihica (strain ATCC BAA-1088 / PV-4).